Consider the following 242-residue polypeptide: Venom nerve growth factor 2 (242 aa).

The N-terminal stretch at 1 to 18 (MSMLCYTLIIAFLIGIWA) is a signal peptide. Positions 19–125 (APKSEDNVPL…ALNRNIRSKR (107 aa)) are excised as a propeptide. The disordered stretch occupies residues 46 to 69 (KALKTSRNTDQRHPAPKKAEDQEL). The span at 52–66 (RNTDQRHPAPKKAED) shows a compositional bias: basic and acidic residues. 3 disulfides stabilise this stretch: Cys-139/Cys-203, Cys-181/Cys-231, and Cys-191/Cys-233. The N-linked (GlcNAc...) asparagine glycan is linked to Asn-147.

This sequence belongs to the NGF-beta family. As to quaternary structure, homodimer; non-covalently linked. In terms of tissue distribution, expressed by the venom gland.

The protein localises to the secreted. Functionally, nerve growth factor is important for the development and maintenance of the sympathetic and sensory nervous systems. It stimulates division and differentiation of sympathetic and embryonic sensory neurons as well as basal forebrain cholinergic neurons in the brain. Its relevance in the snake venom is not clear. However, it has been shown to inhibit metalloproteinase-dependent proteolysis of platelet glycoprotein Ib alpha, suggesting a metalloproteinase inhibition to prevent metalloprotease autodigestion and/or protection against prey proteases. Binds a lipid between the two protein chains in the homodimer. The lipid-bound form promotes histamine relase from mouse mast cells, contrary to the lipid-free form. The protein is Venom nerve growth factor 2 of Demansia vestigiata (Lesser black whip snake).